Reading from the N-terminus, the 124-residue chain is Small ribosomal subunit protein bS6 (124 aa).

A disordered region spans residues 97 to 124; sequence TGPSPMMKEVQREEAKKAAAAQPTEAQA. Low complexity predominate over residues 114–124; it reads AAAAQPTEAQA.

Belongs to the bacterial ribosomal protein bS6 family.

Its function is as follows. Binds together with bS18 to 16S ribosomal RNA. The polypeptide is Small ribosomal subunit protein bS6 (Paraburkholderia phymatum (strain DSM 17167 / CIP 108236 / LMG 21445 / STM815) (Burkholderia phymatum)).